The primary structure comprises 126 residues: NADH-quinone oxidoreductase subunit A (126 aa).

The next 3 membrane-spanning stretches (helical) occupy residues 16-36 (ILVL…AAAI), 73-93 (ILFI…VAFG), and 95-115 (MSMT…VGFA).

It belongs to the complex I subunit 3 family. In terms of assembly, NDH-1 is composed of 14 different subunits. Subunits NuoA, H, J, K, L, M, N constitute the membrane sector of the complex.

The protein localises to the cell inner membrane. It carries out the reaction a quinone + NADH + 5 H(+)(in) = a quinol + NAD(+) + 4 H(+)(out). NDH-1 shuttles electrons from NADH, via FMN and iron-sulfur (Fe-S) centers, to quinones in the respiratory chain. The immediate electron acceptor for the enzyme in this species is believed to be ubiquinone. Couples the redox reaction to proton translocation (for every two electrons transferred, four hydrogen ions are translocated across the cytoplasmic membrane), and thus conserves the redox energy in a proton gradient. The sequence is that of NADH-quinone oxidoreductase subunit A from Rhodobacter capsulatus (Rhodopseudomonas capsulata).